Here is a 299-residue protein sequence, read N- to C-terminus: Protoheme IX farnesyltransferase 1 (299 aa).

A run of 9 helical transmembrane segments spans residues 24 to 44 (VVAL…PGVP), 46 to 66 (AAVV…AAMV), 97 to 117 (LLVA…CCNA), 118 to 138 (LTAW…TLLL), 146 to 166 (IVIG…AVNG), 170 to 190 (AFAL…FWAL), 217 to 237 (LSIV…VALG), 239 to 259 (AGAI…FLAV), and 278 to 298 (IWYL…LIPL).

This sequence belongs to the UbiA prenyltransferase family. Protoheme IX farnesyltransferase subfamily.

Its subcellular location is the cell inner membrane. It carries out the reaction heme b + (2E,6E)-farnesyl diphosphate + H2O = Fe(II)-heme o + diphosphate. Its pathway is porphyrin-containing compound metabolism; heme O biosynthesis; heme O from protoheme: step 1/1. Its function is as follows. Converts heme B (protoheme IX) to heme O by substitution of the vinyl group on carbon 2 of heme B porphyrin ring with a hydroxyethyl farnesyl side group. The chain is Protoheme IX farnesyltransferase 1 from Chromobacterium violaceum (strain ATCC 12472 / DSM 30191 / JCM 1249 / CCUG 213 / NBRC 12614 / NCIMB 9131 / NCTC 9757 / MK).